The sequence spans 358 residues: WD repeat-containing protein 53 (358 aa).

5 WD repeats span residues 8 to 46 (GHSSPILCLNASQEGLVASGAEGGDLVVWGEDGTLLGHT), 92 to 131 (VNEEEINCLSLNETENLLASADDSGTIKILDLENKKISRS), 134 to 174 (RHSN…PLWI), 195 to 234 (LNPALAHSVSVASCGNVFSCGAEDGKVRIFRVMGVKCEQE), and 239 to 278 (GHSLGVSQVCFLRESYLLLTGGNDGKIKLWDVSSEIEKKH). A compositionally biased stretch (basic residues) spans 278–294 (HKSPTKHTHRKKTKRAA). The tract at residues 278–309 (HKSPTKHTHRKKTKRAAYTKQGGGTHASVTGE) is disordered.

Belongs to the WD repeat WDR53 family.

The protein is WD repeat-containing protein 53 (WDR53) of Bos taurus (Bovine).